Reading from the N-terminus, the 148-residue chain is Deoxyuridine 5'-triphosphate nucleotidohydrolase (148 aa).

Substrate is bound by residues 68 to 70 (RSG), Asn-81, 85 to 87 (TID), and Lys-95.

Belongs to the dUTPase family. Mg(2+) is required as a cofactor.

It catalyses the reaction dUTP + H2O = dUMP + diphosphate + H(+). Its pathway is pyrimidine metabolism; dUMP biosynthesis; dUMP from dCTP (dUTP route): step 2/2. This enzyme is involved in nucleotide metabolism: it produces dUMP, the immediate precursor of thymidine nucleotides and it decreases the intracellular concentration of dUTP so that uracil cannot be incorporated into DNA. This chain is Deoxyuridine 5'-triphosphate nucleotidohydrolase, found in Rickettsia canadensis (strain McKiel).